A 318-amino-acid chain; its full sequence is Methenyltetrahydromethanopterin cyclohydrolase (318 aa).

This sequence belongs to the MCH family.

The protein resides in the cytoplasm. The enzyme catalyses 5,10-methenyl-5,6,7,8-tetrahydromethanopterin + H2O = N(5)-formyl-5,6,7,8-tetrahydromethanopterin + H(+). It functions in the pathway one-carbon metabolism; methanogenesis from CO(2); 5,10-methenyl-5,6,7,8-tetrahydromethanopterin from CO(2): step 3/3. Catalyzes the reversible interconversion of 5-formyl-H(4)MPT to methenyl-H(4)MPT(+). The chain is Methenyltetrahydromethanopterin cyclohydrolase from Methanocella arvoryzae (strain DSM 22066 / NBRC 105507 / MRE50).